Here is a 1199-residue protein sequence, read N- to C-terminus: Chromatin structure-remodeling complex subunit snf21 (1199 aa).

The 73-residue stretch at 256–328 folds into the HSA domain; it reads QRSDRERRLK…AKQRLQALKE (73 aa). Residues 429–594 form the Helicase ATP-binding domain; the sequence is ISLYNNHLNG…WALLNFVLPR (166 aa). Position 442-449 (442-449) interacts with ATP; that stretch reads DEMGLGKT. A DEGH box motif is present at residues 544 to 547; sequence DEGH. Positions 740–903 constitute a Helicase C-terminal domain; sequence LLDRILPKLF…STPEEREAFL (164 aa). The tract at residues 1017–1059 is disordered; it reads MESEARPTRGRPKRNIASVDETPALTLNGKPKKKRGPAPDTLT. Positions 1061–1171 constitute a Bromo domain; sequence EHRSLLRRVC…TAMETKIEEL (111 aa).

It belongs to the SNF2/RAD54 helicase family. Component of the RSC complex composed of at least arp9, arp42, rsc1, rsc4, rsc7, rsc9, rsc58, sfh1, snf21, ssr1, ssr2, ssr3 and ssr4. The complex interacts with histone and histone variant components of centromeric chromatin.

Its subcellular location is the nucleus. Helicase. Component of the chromatin structure remodeling complex (RSC), which is involved in transcription regulation and nucleosome positioning. Controls particularly membrane and organelle development genes. In Schizosaccharomyces pombe (strain 972 / ATCC 24843) (Fission yeast), this protein is Chromatin structure-remodeling complex subunit snf21 (snf21).